We begin with the raw amino-acid sequence, 412 residues long: Serine hydroxymethyltransferase (412 aa).

Residues Leu117 and 121-123 contribute to the (6S)-5,6,7,8-tetrahydrofolate site; that span reads GHL. Lys226 is subject to N6-(pyridoxal phosphate)lysine. Residue 349–351 coordinates (6S)-5,6,7,8-tetrahydrofolate; it reads SPF.

This sequence belongs to the SHMT family. As to quaternary structure, homodimer. Requires pyridoxal 5'-phosphate as cofactor.

The protein localises to the cytoplasm. It carries out the reaction (6R)-5,10-methylene-5,6,7,8-tetrahydrofolate + glycine + H2O = (6S)-5,6,7,8-tetrahydrofolate + L-serine. It participates in one-carbon metabolism; tetrahydrofolate interconversion. Its pathway is amino-acid biosynthesis; glycine biosynthesis; glycine from L-serine: step 1/1. In terms of biological role, catalyzes the reversible interconversion of serine and glycine with tetrahydrofolate (THF) serving as the one-carbon carrier. This reaction serves as the major source of one-carbon groups required for the biosynthesis of purines, thymidylate, methionine, and other important biomolecules. Also exhibits THF-independent aldolase activity toward beta-hydroxyamino acids, producing glycine and aldehydes, via a retro-aldol mechanism. The protein is Serine hydroxymethyltransferase of Nitratidesulfovibrio vulgaris (strain ATCC 29579 / DSM 644 / CCUG 34227 / NCIMB 8303 / VKM B-1760 / Hildenborough) (Desulfovibrio vulgaris).